The chain runs to 110 residues: UPF0060 membrane protein Bcep18194_A4425 (110 aa).

4 consecutive transmembrane segments (helical) span residues 9-29 (ALFA…WLVL), 34-54 (PVWL…LLTL), 66-86 (YGGV…GVAL), and 88-108 (RWDV…ALQP).

The protein belongs to the UPF0060 family.

The protein resides in the cell inner membrane. The polypeptide is UPF0060 membrane protein Bcep18194_A4425 (Burkholderia lata (strain ATCC 17760 / DSM 23089 / LMG 22485 / NCIMB 9086 / R18194 / 383)).